Consider the following 115-residue polypeptide: Large ribosomal subunit protein bL19 (115 aa).

It belongs to the bacterial ribosomal protein bL19 family.

This protein is located at the 30S-50S ribosomal subunit interface and may play a role in the structure and function of the aminoacyl-tRNA binding site. This Streptococcus suis (strain 98HAH33) protein is Large ribosomal subunit protein bL19.